The following is a 344-amino-acid chain: tRNA (guanine(26)-N(2))-dimethyltransferase (344 aa).

Residues 1–334 (MIVREGSAEI…ASCDLVESLM (334 aa)) form the Trm1 methyltransferase domain. Positions 35, 60, and 76 each coordinate S-adenosyl-L-methionine.

This sequence belongs to the class I-like SAM-binding methyltransferase superfamily. Trm1 family.

It catalyses the reaction guanosine(26) in tRNA + 2 S-adenosyl-L-methionine = N(2)-dimethylguanosine(26) in tRNA + 2 S-adenosyl-L-homocysteine + 2 H(+). Functionally, dimethylates a single guanine residue at position 26 of a number of tRNAs using S-adenosyl-L-methionine as donor of the methyl groups. This is tRNA (guanine(26)-N(2))-dimethyltransferase from Thermoplasma acidophilum (strain ATCC 25905 / DSM 1728 / JCM 9062 / NBRC 15155 / AMRC-C165).